Reading from the N-terminus, the 445-residue chain is Chromosome partition protein MukF (445 aa).

The segment at 213-241 is leucine-zipper; sequence LSETSNTLKELQDTLQAAGDELQTQILDI.

Belongs to the MukF family. Interacts, and probably forms a ternary complex, with MukE and MukB via its C-terminal region. The complex formation is stimulated by calcium or magnesium. It is required for an interaction between MukE and MukB.

Its subcellular location is the cytoplasm. The protein resides in the nucleoid. Involved in chromosome condensation, segregation and cell cycle progression. May participate in facilitating chromosome segregation by condensation DNA from both sides of a centrally located replisome during cell division. Not required for mini-F plasmid partitioning. Probably acts via its interaction with MukB and MukE. Overexpression results in anucleate cells. It has a calcium binding activity. The protein is Chromosome partition protein MukF of Vibrio vulnificus (strain CMCP6).